The following is a 79-amino-acid chain: Cell division protein ZapB (79 aa).

A coiled-coil region spans residues 3-79 (LEVFEKLEAK…QALLGRMEEV (77 aa)). A compositionally biased stretch (polar residues) spans 36–45 (SLTQEVQSAQ). A disordered region spans residues 36–63 (SLTQEVQSAQHQREELERENNSLKEQQS). Residues 46 to 57 (HQREELERENNS) show a composition bias toward basic and acidic residues.

This sequence belongs to the ZapB family. Homodimer. The ends of the coiled-coil dimer bind to each other, forming polymers. Interacts with FtsZ.

It is found in the cytoplasm. Non-essential, abundant cell division factor that is required for proper Z-ring formation. It is recruited early to the divisome by direct interaction with FtsZ, stimulating Z-ring assembly and thereby promoting cell division earlier in the cell cycle. Its recruitment to the Z-ring requires functional FtsA or ZipA. In Salmonella agona (strain SL483), this protein is Cell division protein ZapB.